A 574-amino-acid polypeptide reads, in one-letter code: Pentatricopeptide repeat-containing protein At5g25630 (574 aa).

Residues 1-21 (MEDVNQEKKKVPPMSEPERST) show a composition bias toward basic and acidic residues. The tract at residues 1-25 (MEDVNQEKKKVPPMSEPERSTPIKT) is disordered. PPR repeat units follow at residues 44–78 (TVRS…GHRP), 79–113 (SLIS…GTKL), 114–148 (DSIF…GLNP), 149–183 (TTST…GNVD), 187–221 (NIRT…GVRP), 222–258 (DTVT…KAKP), 259–293 (NGRT…RVEA), 294–328 (NLVV…NVKA), 329–363 (DVIT…GVKP), 364–394 (DAHA…LIVE), 398–432 (NVVI…GVSP), and 433–467 (NIKT…GVKP).

It belongs to the PPR family. P subfamily.

The polypeptide is Pentatricopeptide repeat-containing protein At5g25630 (Arabidopsis thaliana (Mouse-ear cress)).